The chain runs to 1079 residues: Adhesion G-protein coupled receptor F3 (1079 aa).

The signal sequence occupies residues 1 to 25 (MVCSAAPLLLLATTLPLLGSPVAQA). The Extracellular segment spans residues 26–775 (SQPVSETGVR…EEPALALLTQ (750 aa)). N188, N264, N301, N382, N441, and N648 each carry an N-linked (GlcNAc...) asparagine glycan. One can recognise a GAIN-B domain in the interval 599–765 (HPFAFSLPNV…SVLMSPHTVP (167 aa)). 2 cysteine pairs are disulfide-bonded: C715-C747 and C734-C749. The segment at 715 to 765 (CVFWDHSLFQGRGGWSKEGCQAQVASASPTAQCLCQHLTAFSVLMSPHTVP) is GPS. The helical transmembrane segment at 776–796 (VGLGASILALLVCLGVYWLVW) threads the bilayer. Residues 797–811 (RVVVRNKISYFRHAA) lie on the Cytoplasmic side of the membrane. The chain crosses the membrane as a helical span at residues 812–832 (LLNMVFCLLAADTCFLGAPFL). Topologically, residues 833–851 (SPGPRSPLCLAAAFLCHFL) are extracellular. A helical transmembrane segment spans residues 852–874 (YLATFFWMLAQALVLAHQLLFVF). Over 875 to 881 (HQLAKHR) the chain is Cytoplasmic. Residues 882 to 902 (VLPLMVLLGYLCPLGLAGVTL) traverse the membrane as a helical segment. The Extracellular segment spans residues 903-928 (GLYLPQGQYLREGECWLDGKGGALYT). Residues 929–949 (FVGPVLAIIGVNGLVLAMAML) traverse the membrane as a helical segment. Residues 950–973 (KLLRPSLSEGPPAEKRQALLGVIK) are Cytoplasmic-facing. Residues 974 to 994 (ALLILTPIFGLTWGLGLATLL) form a helical membrane-spanning segment. The Extracellular segment spans residues 995 to 1002 (EEVSTVPH). Residues 1003 to 1023 (YIFTILNTLQGVFILLFGCLM) form a helical membrane-spanning segment. Over 1024–1079 (DRKIQEALRKRFCRAQAPSSTISLVSCCLQILSCASKSMSEGIPWPSSEDMGTARS) the chain is Cytoplasmic.

It belongs to the G-protein coupled receptor 2 family. Adhesion G-protein coupled receptor (ADGR) subfamily. In terms of assembly, heterodimer of 2 chains generated by proteolytic processing; the large extracellular N-terminal fragment and the membrane-bound C-terminal fragment predominantly remain associated and non-covalently linked. Post-translationally, autoproteolytically processed at the GPS region of the GAIN-B domain; this cleavage modulates receptor activity.

Its subcellular location is the membrane. In terms of biological role, orphan receptor. In Homo sapiens (Human), this protein is Adhesion G-protein coupled receptor F3 (ADGRF3).